The primary structure comprises 142 residues: Putative pre-16S rRNA nuclease (142 aa).

Belongs to the YqgF nuclease family.

It localises to the cytoplasm. Functionally, could be a nuclease involved in processing of the 5'-end of pre-16S rRNA. This Shouchella clausii (strain KSM-K16) (Alkalihalobacillus clausii) protein is Putative pre-16S rRNA nuclease.